A 387-amino-acid polypeptide reads, in one-letter code: Alpha-sarcoglycan (387 aa).

An N-terminal signal peptide occupies residues 1–23 (MAATLTWILLFVGLLAGLRDTKA). Over 24–290 (QQTTLYPLVG…ATGRDFLADA (267 aa)) the chain is Extracellular. 2 N-linked (GlcNAc...) asparagine glycosylation sites follow: Asn174 and Asn246. The chain crosses the membrane as a helical span at residues 291-311 (LVTLLVPLLVALLLTLLLAYI). The Cytoplasmic portion of the chain corresponds to 312–387 (MCCRREGQLK…AQVPLILDQH (76 aa)). Residue Ser377 is modified to Phosphoserine.

This sequence belongs to the sarcoglycan alpha/epsilon family. As to quaternary structure, interacts with the syntrophin SNTA1. Cross-link to form 2 major subcomplexes: one consisting of SGCB, SGCD and SGCG and the other consisting of SGCB and SGCD. The association between SGCB and SGCG is particularly strong while SGCA is loosely associated with the other sarcoglycans. As to expression, strongly expressed in skeletal and heart muscle.

Its subcellular location is the cell membrane. It localises to the sarcolemma. The protein resides in the cytoplasm. The protein localises to the cytoskeleton. Functionally, component of the sarcoglycan complex, a subcomplex of the dystrophin-glycoprotein complex which forms a link between the F-actin cytoskeleton and the extracellular matrix. This Mesocricetus auratus (Golden hamster) protein is Alpha-sarcoglycan (SGCA).